A 104-amino-acid polypeptide reads, in one-letter code: Urease subunit beta (104 aa).

It belongs to the urease beta subunit family. Heterotrimer of UreA (gamma), UreB (beta) and UreC (alpha) subunits. Three heterotrimers associate to form the active enzyme.

Its subcellular location is the cytoplasm. The enzyme catalyses urea + 2 H2O + H(+) = hydrogencarbonate + 2 NH4(+). The protein operates within nitrogen metabolism; urea degradation; CO(2) and NH(3) from urea (urease route): step 1/1. This is Urease subunit beta from Synechococcus sp. (strain RCC307).